A 193-amino-acid polypeptide reads, in one-letter code: Histone H5 (193 aa).

Positions T1–A11 are enriched in pro residues. 2 disordered regions span residues T1 to Y29 and G80 to K193. Residues K13–A24 are compositionally biased toward basic residues. The 74-residue stretch at S25–K98 folds into the H15 domain. Residues R104–K193 are compositionally biased toward basic residues.

Belongs to the histone H1/H5 family. Erythroid cells.

The protein localises to the nucleus. Its subcellular location is the chromosome. Functionally, histone H5 performs the same function as H1, being necessary for the condensation of nucleosome chains into higher order structures, and replaces histone H1 in certain cells. The protein is Histone H5 of Anser anser anser (Western greylag goose).